We begin with the raw amino-acid sequence, 257 residues long: uncharacterized protein (257 aa).

NAD(+) is bound by residues D34, D60, V61, N87, Y152, and K156. Y152 serves as the catalytic Proton acceptor.

It belongs to the short-chain dehydrogenases/reductases (SDR) family.

This is an uncharacterized protein from Bacillus subtilis (strain 168).